Reading from the N-terminus, the 347-residue chain is Protein RecA (347 aa).

ATP is bound at residue 65 to 72; the sequence is GPESSGKT. Positions 327-336 are enriched in basic and acidic residues; sequence KFEPTELSRE. The segment at 327-347 is disordered; sequence KFEPTELSREEGDEDTLEDAM. The segment covering 337-347 has biased composition (acidic residues); the sequence is EGDEDTLEDAM.

The protein belongs to the RecA family.

Its subcellular location is the cytoplasm. Can catalyze the hydrolysis of ATP in the presence of single-stranded DNA, the ATP-dependent uptake of single-stranded DNA by duplex DNA, and the ATP-dependent hybridization of homologous single-stranded DNAs. It interacts with LexA causing its activation and leading to its autocatalytic cleavage. This is Protein RecA from Xylella fastidiosa (strain M23).